We begin with the raw amino-acid sequence, 732 residues long: Polyadenylate-binding protein, cytoplasmic and nuclear (732 aa).

The span at 1–19 (MSAETSTTPAPAENTNGTP) shows a compositional bias: polar residues. The disordered stretch occupies residues 1–26 (MSAETSTTPAPAENTNGTPDNAPAPE). RRM domains lie at 42–120 (ASLY…WSQR), 130–207 (GNVF…HHIS), 223–300 (TNIY…RAQK), and 326–454 (VNLY…LAQR). 2 disordered regions span residues 357-413 (VMRD…KKPL) and 706-732 (MKNK…ENKA). Over residues 371–412 (SETKESANKENEKAAEGEKEPAAEEKEKEEKKEAEQKPEKKP) the composition is skewed to basic and acidic residues. One can recognise a PABC domain in the interval 630–707 (VGVLTAQALS…ALSVYDEYMK (78 aa)).

Belongs to the polyadenylate-binding protein type-1 family.

It is found in the cytoplasm. Its subcellular location is the nucleus. Functionally, binds the poly(A) tail of mRNA. Appears to be an important mediator of the multiple roles of the poly(A) tail in mRNA biogenesis, stability and translation. In the nucleus, involved in both mRNA cleavage and polyadenylation. Is also required for efficient mRNA export to the cytoplasm. Acts in concert with a poly(A)-specific nuclease (PAN) to affect poly(A) tail shortening, which may occur concomitantly with either nucleocytoplasmic mRNA transport or translational initiation. In the cytoplasm, stimulates translation initiation and regulates mRNA decay through translation termination-coupled poly(A) shortening, probably mediated by PAN. This is Polyadenylate-binding protein, cytoplasmic and nuclear (pab1) from Emericella nidulans (strain FGSC A4 / ATCC 38163 / CBS 112.46 / NRRL 194 / M139) (Aspergillus nidulans).